The sequence spans 148 residues: UPF0591 membrane protein C15E1.02c (148 aa).

Transmembrane regions (helical) follow at residues 14–34, 80–102, and 122–142; these read AILL…GPLM, LLQL…VFGA, and ILVK…ALIG.

Belongs to the UPF0591 family.

It is found in the membrane. In Schizosaccharomyces pombe (strain 972 / ATCC 24843) (Fission yeast), this protein is UPF0591 membrane protein C15E1.02c.